The chain runs to 163 residues: Ribosome maturation factor RimP (163 aa).

This sequence belongs to the RimP family.

It is found in the cytoplasm. In terms of biological role, required for maturation of 30S ribosomal subunits. The polypeptide is Ribosome maturation factor RimP (Bordetella petrii (strain ATCC BAA-461 / DSM 12804 / CCUG 43448)).